Consider the following 249-residue polypeptide: Hydantoin racemase (249 aa).

The protein belongs to the HyuE racemase family. As to quaternary structure, homohexamer.

It carries out the reaction a D-5-monosubstituted hydantoin = a L-5-monosubstituted hydantoin. The catalysed reaction is D-5-[2-(methylsulfanyl)ethyl]hydantoin = L-5-[2-(methysulfanyl)ethyl]hydantoin. It catalyses the reaction D-5-benzylhydantoin = L-5-benzylhydantoin. The enzyme catalyses D-5-isopropylhydantoin = L-5-isopropylhydantoin. It carries out the reaction D-5-isobutylhydantoin = L-5-isobutylhydantoin. With respect to regulation, strongly inhibited by Cu(2+) and Zn(2+). Slightly stimulated by the addition of Mn(2+) or Co(2+), but also by metal-chelating agents such as EDTA or EGTA, indicating that the enzyme is not a metalloenzyme. Functionally, involved in the asymmetric conversion of racemic 5-substituted hydantoins to the corresponding L-amino acids. Catalyzes the racemization via enolization of D- and L-5-monosubstituted hydantoins. Is able to racemize 5-substituted hydantoins having aromatic or aliphatic substituents such as 5-(2-methylthioethyl)hydantoin, 5-isopropylhydantoin, 5-isobutylhydantoin and 5-benzylhydantoin. The sequence is that of Hydantoin racemase from Pseudomonas sp. (strain NS671).